We begin with the raw amino-acid sequence, 536 residues long: Glutamate--tRNA ligase, mitochondrial (536 aa).

48–50 (RFA) serves as a coordination point for L-glutamate. Positions 53 to 61 (PTGFLHLGS) match the 'HIGH' region motif. H58 contacts ATP. Residues E84, 235 to 239 (YHLAN), and R253 each bind L-glutamate. ATP contacts are provided by residues E256 and 291 to 295 (KLSKR). The 'KMSKS' region motif lies at 291 to 295 (KLSKR).

The protein belongs to the class-I aminoacyl-tRNA synthetase family. Glutamate--tRNA ligase type 1 subfamily.

The protein resides in the mitochondrion matrix. The enzyme catalyses tRNA(Glu) + L-glutamate + ATP = L-glutamyl-tRNA(Glu) + AMP + diphosphate. Functionally, catalyzes the attachment of glutamate to tRNA(Glu) in a two-step reaction: glutamate is first activated by ATP to form Glu-AMP and then transferred to the acceptor end of tRNA(Glu). The sequence is that of Glutamate--tRNA ligase, mitochondrial (MSE1) from Saccharomyces cerevisiae (strain ATCC 204508 / S288c) (Baker's yeast).